Consider the following 120-residue polypeptide: Large ribosomal subunit protein uL18 (120 aa).

It belongs to the universal ribosomal protein uL18 family. Part of the 50S ribosomal subunit; part of the 5S rRNA/L5/L18/L25 subcomplex. Contacts the 5S and 23S rRNAs.

This is one of the proteins that bind and probably mediate the attachment of the 5S RNA into the large ribosomal subunit, where it forms part of the central protuberance. This Rhodospirillum rubrum (strain ATCC 11170 / ATH 1.1.1 / DSM 467 / LMG 4362 / NCIMB 8255 / S1) protein is Large ribosomal subunit protein uL18.